Consider the following 466-residue polypeptide: MSMNPIHVVGGGLAGSEAAWQIAEAGVPVVLHEMRPVRRTDAHHTDRLAELVCSNSFRADDWTGNAVGLLHAEMRRLGSIIMSAGDAHQVPAGGALAVDREGFSQAVTERLEAHPLVTIAREEIAGLPPQDWDSVILATGPLTSPALADAVLKLTGEDQLSFFDAIAPIVHFESIDMDVAWRQSRYDKAGPGGDAAAYINCPMTEAQYEAFIDALLAAPKAEFKEWEHVPYFDGCLPIEVMAERGRETLRHGPMKPVGLTNAHRPDEKPHAVVQLRQDNALGTLWNMVGFQTKLKHGAQTEVFRMIPGLEKAVFARLGGLHRNTFINSPRLLDGVLRLKAQPRLRFAGQVTGVEGYVESAAVGLLAGRFAAAERLGRPAVAPPPTTALGGLIGHITGGHLEGGSGSFQPMNINYGLIPPIAPPKRDAEGRRLGAKEKTRIKKRLVGERALADLEAWLSGAQAVAAE.

Residue 10 to 15 coordinates FAD; it reads GGGLAG.

It belongs to the MnmG family. TrmFO subfamily. It depends on FAD as a cofactor.

Its subcellular location is the cytoplasm. The catalysed reaction is uridine(54) in tRNA + (6R)-5,10-methylene-5,6,7,8-tetrahydrofolate + NADH + H(+) = 5-methyluridine(54) in tRNA + (6S)-5,6,7,8-tetrahydrofolate + NAD(+). It carries out the reaction uridine(54) in tRNA + (6R)-5,10-methylene-5,6,7,8-tetrahydrofolate + NADPH + H(+) = 5-methyluridine(54) in tRNA + (6S)-5,6,7,8-tetrahydrofolate + NADP(+). Its function is as follows. Catalyzes the folate-dependent formation of 5-methyl-uridine at position 54 (M-5-U54) in all tRNAs. This Phenylobacterium zucineum (strain HLK1) protein is Methylenetetrahydrofolate--tRNA-(uracil-5-)-methyltransferase TrmFO.